The chain runs to 363 residues: Pyruvate dehydrogenase E1 component subunit alpha, mitochondrial (363 aa).

The N-terminal 2 residues, 1-2 (RN), are a transit peptide targeting the mitochondrion. The residue at position 36 (Lys36) is an N6-acetyllysine; alternate. Lys36 carries the post-translational modification N6-succinyllysine; alternate. Residues His65, Tyr91, Arg92, Ala130, Gly138, Val140, Asp169, Gly170, Ala171, Asn198, and Tyr200 each coordinate pyruvate. 2 residues coordinate thiamine diphosphate: Tyr91 and Arg92. Thiamine diphosphate contacts are provided by Gly138, Val140, Asp169, Gly170, Ala171, and Asn198. Residue Asp169 coordinates Mg(2+). Mg(2+) is bound by residues Asn198 and Tyr200. The residue at position 205 (Ser205) is a Phosphoserine; by PDK1. The residue at position 217 (Lys217) is an N6-acetyllysine; alternate. Lys217 carries the post-translational modification N6-succinyllysine; alternate. N6-acetyllysine is present on Lys240. Lys250 is modified (N6-succinyllysine). Position 265 (His265) interacts with thiamine diphosphate. Ser266 is subject to Phosphoserine; by PDK1, PDK2, PDK3 and PDK4. A Phosphoserine modification is found at Ser268. Ser273 carries the post-translational modification Phosphoserine; by PDK1, PDK2, PDK3 and PDK4. Position 274 is a phosphotyrosine (Tyr274). Lys286 is subject to N6-acetyllysine; alternate. The residue at position 286 (Lys286) is an N6-succinyllysine; alternate. N6-acetyllysine occurs at positions 294 and 309. Lys358 carries the post-translational modification N6-succinyllysine.

As to quaternary structure, heterotetramer of two PDHA1 and two PDHB subunits. The heterotetramer interacts with DLAT, and is part of the multimeric pyruvate dehydrogenase complex that contains multiple copies of pyruvate dehydrogenase (E1), dihydrolipoamide acetyltransferase (DLAT, E2) and lipoamide dehydrogenase (DLD, E3). These subunits are bound to an inner core composed of about 48 DLAT and 12 PDHX molecules. Thiamine diphosphate is required as a cofactor. It depends on Mg(2+) as a cofactor. Phosphorylation at Ser-205, Ser-266 and Ser-273 by PDK family kinases inactivates the enzyme; for this phosphorylation at a single site is sufficient. Phosphorylation at Ser-266 interferes with access to active site, and thereby inactivates the enzyme. Dephosphorylation at all three sites, i.e. at Ser-205, Ser-266 and Ser-273, is required for reactivation. Post-translationally, acetylation alters the phosphorylation pattern. Deacetylated by SIRT3.

It is found in the mitochondrion matrix. The enzyme catalyses N(6)-[(R)-lipoyl]-L-lysyl-[protein] + pyruvate + H(+) = N(6)-[(R)-S(8)-acetyldihydrolipoyl]-L-lysyl-[protein] + CO2. With respect to regulation, pyruvate dehydrogenase activity is inhibited by phosphorylation of PDHA1; it is reactivated by dephosphorylation. In terms of biological role, the pyruvate dehydrogenase complex catalyzes the overall conversion of pyruvate to acetyl-CoA and CO(2), and thereby links the glycolytic pathway to the tricarboxylic cycle. The polypeptide is Pyruvate dehydrogenase E1 component subunit alpha, mitochondrial (PDHA) (Sminthopsis macroura (Stripe-faced dunnart)).